The sequence spans 382 residues: D-galactonate dehydratase (382 aa).

Asp183 lines the Mg(2+) pocket. His185 acts as the Proton donor in catalysis. Mg(2+) contacts are provided by Glu209 and Glu235. His285 (proton acceptor) is an active-site residue.

The protein belongs to the mandelate racemase/muconate lactonizing enzyme family. GalD subfamily. The cofactor is Mg(2+).

The enzyme catalyses D-galactonate = 2-dehydro-3-deoxy-D-galactonate + H2O. It functions in the pathway carbohydrate acid metabolism; D-galactonate degradation; D-glyceraldehyde 3-phosphate and pyruvate from D-galactonate: step 1/3. In terms of biological role, catalyzes the dehydration of D-galactonate to 2-keto-3-deoxy-D-galactonate. In Escherichia coli O9:H4 (strain HS), this protein is D-galactonate dehydratase.